Reading from the N-terminus, the 430-residue chain is Toxin coregulated pilus biosynthesis protein B (430 aa).

Residues 351–366 are compositionally biased toward polar residues; sequence NFSSESAKDSQGTTQK. Residues 351–371 form a disordered region; that stretch reads NFSSESAKDSQGTTQKDGSKG.

Functionally, involved in TCP pilus biogenesis. The chain is Toxin coregulated pilus biosynthesis protein B (tcpB) from Vibrio cholerae serotype O1 (strain ATCC 39315 / El Tor Inaba N16961).